The sequence spans 404 residues: Putative aspartate aminotransferase, cytoplasmic 2 (404 aa).

Lysine 249 carries the post-translational modification N6-(pyridoxal phosphate)lysine.

The protein belongs to the class-I pyridoxal-phosphate-dependent aminotransferase family. In terms of assembly, homodimer. The cofactor is pyridoxal 5'-phosphate.

It localises to the cytoplasm. It carries out the reaction L-aspartate + 2-oxoglutarate = oxaloacetate + L-glutamate. In Mus musculus (Mouse), this protein is Putative aspartate aminotransferase, cytoplasmic 2 (Got1l1).